The sequence spans 546 residues: Methionine--tRNA ligase (546 aa).

Positions 15–25 match the 'HIGH' region motif; that stretch reads PYANGPIHLGH. 4 residues coordinate Zn(2+): cysteine 146, cysteine 149, cysteine 159, and cysteine 162. Positions 332-336 match the 'KMSKS' region motif; the sequence is KMSKS. Lysine 335 contributes to the ATP binding site.

It belongs to the class-I aminoacyl-tRNA synthetase family. MetG type 1 subfamily. Monomer. Zn(2+) serves as cofactor.

The protein resides in the cytoplasm. The catalysed reaction is tRNA(Met) + L-methionine + ATP = L-methionyl-tRNA(Met) + AMP + diphosphate. Its function is as follows. Is required not only for elongation of protein synthesis but also for the initiation of all mRNA translation through initiator tRNA(fMet) aminoacylation. The polypeptide is Methionine--tRNA ligase (Coxiella burnetii (strain RSA 331 / Henzerling II)).